We begin with the raw amino-acid sequence, 524 residues long: GMP synthase [glutamine-hydrolyzing] (524 aa).

Residues arginine 8–leucine 206 form the Glutamine amidotransferase type-1 domain. Cysteine 85 serves as the catalytic Nucleophile. Active-site residues include histidine 180 and glutamate 182. The GMPS ATP-PPase domain maps to tryptophan 207–arginine 399. Serine 234 to serine 240 is an ATP binding site.

As to quaternary structure, homodimer.

The catalysed reaction is XMP + L-glutamine + ATP + H2O = GMP + L-glutamate + AMP + diphosphate + 2 H(+). It functions in the pathway purine metabolism; GMP biosynthesis; GMP from XMP (L-Gln route): step 1/1. Catalyzes the synthesis of GMP from XMP. The chain is GMP synthase [glutamine-hydrolyzing] from Nitrosococcus oceani (strain ATCC 19707 / BCRC 17464 / JCM 30415 / NCIMB 11848 / C-107).